We begin with the raw amino-acid sequence, 840 residues long: Kinesin-like protein KIN-14J (840 aa).

Residues 1–74 form a disordered region; it reads MEADPAPSST…KGEEPVVSAE (74 aa). The Kinesin motor domain maps to 177–501; it reads NIRVFCRCRP…LNFASRVRAI (325 aa). Position 260–267 (260–267) interacts with ATP; that stretch reads GQTGTGKT. A coiled-coil region spans residues 517 to 594; the sequence is KLKQMTEKIR…KKAARDTARS (78 aa). A compositionally biased stretch (basic and acidic residues) spans 581–593; sequence LANEKKAARDTAR. Positions 581–617 are disordered; that stretch reads LANEKKAARDTARSTKPPLAPMRQRPPLGRIGNHIPP.

Belongs to the TRAFAC class myosin-kinesin ATPase superfamily. Kinesin family. KIN-14 subfamily.

The sequence is that of Kinesin-like protein KIN-14J from Oryza sativa subsp. japonica (Rice).